Consider the following 865-residue polypeptide: Alanine--tRNA ligase (865 aa).

Zn(2+)-binding residues include H554, H558, C656, and H660.

The protein belongs to the class-II aminoacyl-tRNA synthetase family. Requires Zn(2+) as cofactor.

The protein localises to the cytoplasm. It carries out the reaction tRNA(Ala) + L-alanine + ATP = L-alanyl-tRNA(Ala) + AMP + diphosphate. Its function is as follows. Catalyzes the attachment of alanine to tRNA(Ala) in a two-step reaction: alanine is first activated by ATP to form Ala-AMP and then transferred to the acceptor end of tRNA(Ala). Also edits incorrectly charged Ser-tRNA(Ala) and Gly-tRNA(Ala) via its editing domain. The chain is Alanine--tRNA ligase from Francisella tularensis subsp. tularensis (strain FSC 198).